Reading from the N-terminus, the 916-residue chain is Chitin synthase B (916 aa).

2 disordered regions span residues 1–84 and 114–141; these read MAYQ…AGFH and SPYARSETSSTEAWRQRQAPGGGGGGGL. An N-linked (GlcNAc...) asparagine glycan is attached at asparagine 18. Residues 60-75 are compositionally biased toward polar residues; it reads RGTSPVRPTSGYSLTE. The N-linked (GlcNAc...) asparagine glycan is linked to asparagine 546. The next 7 helical transmembrane spans lie at 572-594, 628-648, 663-683, 715-735, 743-763, 845-865, and 884-904; these read MFFLHIQMLYNVFNTILTWFSLA, IINTIVKYVYLGLLLLQFILA, SFVVFGIIQIYVVVDALYLVV, IIIIALAATFGLYFVASFMYL, SFPAYMFVQSSYINVLNVYAF, LVTLWIFSNAFLAVCITSDGM, and ALLWSNAAVALVRFIGACWFL.

Belongs to the chitin synthase family. Class III subfamily.

The protein resides in the cell membrane. It catalyses the reaction [(1-&gt;4)-N-acetyl-beta-D-glucosaminyl](n) + UDP-N-acetyl-alpha-D-glucosamine = [(1-&gt;4)-N-acetyl-beta-D-glucosaminyl](n+1) + UDP + H(+). Functionally, polymerizes chitin, a structural polymer of the cell wall and septum, by transferring the sugar moiety of UDP-GlcNAc to the non-reducing end of the growing chitin polymer. Involved in hyphal growth and more particularly in branching. This chain is Chitin synthase B, found in Aspergillus oryzae (strain ATCC 42149 / RIB 40) (Yellow koji mold).